A 199-amino-acid polypeptide reads, in one-letter code: Large ribosomal subunit protein bL25 (199 aa).

The protein belongs to the bacterial ribosomal protein bL25 family. CTC subfamily. Part of the 50S ribosomal subunit; part of the 5S rRNA/L5/L18/L25 subcomplex. Contacts the 5S rRNA. Binds to the 5S rRNA independently of L5 and L18.

Its function is as follows. This is one of the proteins that binds to the 5S RNA in the ribosome where it forms part of the central protuberance. This Herpetosiphon aurantiacus (strain ATCC 23779 / DSM 785 / 114-95) protein is Large ribosomal subunit protein bL25.